The primary structure comprises 97 residues: MGRSLKKGPYVHPSLIKKIREMNEKGEKKVIKTWSRASMILPEMVGHTIAVHNGMKHIPVYITEQMIGHRLGEFSPTRRFGGHPDKKAVKGKIEKQG.

The tract at residues 74 to 97 (FSPTRRFGGHPDKKAVKGKIEKQG) is disordered. Residues 82 to 97 (GHPDKKAVKGKIEKQG) are compositionally biased toward basic and acidic residues.

The protein belongs to the universal ribosomal protein uS19 family.

Its function is as follows. Protein S19 forms a complex with S13 that binds strongly to the 16S ribosomal RNA. The sequence is that of Small ribosomal subunit protein uS19 from Petrotoga mobilis (strain DSM 10674 / SJ95).